We begin with the raw amino-acid sequence, 158 residues long: 6,7-dimethyl-8-ribityllumazine synthase (158 aa).

Residues phenylalanine 22, 57–59 (AFE), and 81–83 (AVI) each bind 5-amino-6-(D-ribitylamino)uracil. 86 to 87 (GT) contacts (2S)-2-hydroxy-3-oxobutyl phosphate. Histidine 89 serves as the catalytic Proton donor. Phenylalanine 114 lines the 5-amino-6-(D-ribitylamino)uracil pocket. (2S)-2-hydroxy-3-oxobutyl phosphate is bound at residue arginine 128.

The protein belongs to the DMRL synthase family. As to quaternary structure, forms an icosahedral capsid composed of 60 subunits, arranged as a dodecamer of pentamers.

It carries out the reaction (2S)-2-hydroxy-3-oxobutyl phosphate + 5-amino-6-(D-ribitylamino)uracil = 6,7-dimethyl-8-(1-D-ribityl)lumazine + phosphate + 2 H2O + H(+). It participates in cofactor biosynthesis; riboflavin biosynthesis; riboflavin from 2-hydroxy-3-oxobutyl phosphate and 5-amino-6-(D-ribitylamino)uracil: step 1/2. In terms of biological role, catalyzes the formation of 6,7-dimethyl-8-ribityllumazine by condensation of 5-amino-6-(D-ribitylamino)uracil with 3,4-dihydroxy-2-butanone 4-phosphate. This is the penultimate step in the biosynthesis of riboflavin. In Shewanella amazonensis (strain ATCC BAA-1098 / SB2B), this protein is 6,7-dimethyl-8-ribityllumazine synthase.